A 435-amino-acid polypeptide reads, in one-letter code: GTPase Der (435 aa).

EngA-type G domains are found at residues 3 to 168 (PLVA…PDET) and 176 to 351 (IKLA…QNRQ). Residues 9–16 (GRPNVGKS), 56–60 (DTGGY), 120–123 (NKVE), 182–189 (GRPNVGKS), 229–233 (DTAGL), and 294–297 (NKWD) contribute to the GTP site. One can recognise a KH-like domain in the interval 352–435 (KKISTSELNR…VPVSFRYRKK (84 aa)).

This sequence belongs to the TRAFAC class TrmE-Era-EngA-EngB-Septin-like GTPase superfamily. EngA (Der) GTPase family. As to quaternary structure, associates with the 50S ribosomal subunit.

GTPase that plays an essential role in the late steps of ribosome biogenesis. The protein is GTPase Der of Chlorobium phaeobacteroides (strain BS1).